Reading from the N-terminus, the 329-residue chain is Protein SPATA31F3 (329 aa).

Residues 11 to 31 form a helical membrane-spanning segment; it reads VGYSVYTYGSIFIIALIIWQV. Positions 58 to 85 form a coiled coil; the sequence is SDRATRAKRTSKEEAEKLQKLLDTMKSQ. Disordered stretches follow at residues 149–184, 201–250, and 288–329; these read ADRS…RSAT, QQLD…AAPT, and KPMT…KRNI. S152 and S153 each carry phosphoserine. Polar residues-rich tracts occupy residues 154–184 and 201–223; these read ELTY…RSAT and QQLD…SSTD. Over residues 232–242 the composition is skewed to basic residues; that stretch reads QKKRKKTKKLA. The segment covering 293 to 320 has biased composition (basic and acidic residues); that stretch reads EPEKTHSPVRDQAEGAEKKKKPECDLKA.

Belongs to the SPATA31 family.

It localises to the membrane. This chain is Protein SPATA31F3, found in Rattus norvegicus (Rat).